Reading from the N-terminus, the 250-residue chain is 2,3-bisphosphoglycerate-dependent phosphoglycerate mutase (250 aa).

Substrate is bound by residues 10–17 (RHGESQWN), 23–24 (TG), R62, 89–92 (ERHY), K100, 116–117 (RR), and 185–186 (GN). H11 serves as the catalytic Tele-phosphohistidine intermediate. E89 serves as the catalytic Proton donor/acceptor.

The protein belongs to the phosphoglycerate mutase family. BPG-dependent PGAM subfamily. As to quaternary structure, homodimer.

It carries out the reaction (2R)-2-phosphoglycerate = (2R)-3-phosphoglycerate. The protein operates within carbohydrate degradation; glycolysis; pyruvate from D-glyceraldehyde 3-phosphate: step 3/5. Its function is as follows. Catalyzes the interconversion of 2-phosphoglycerate and 3-phosphoglycerate. The polypeptide is 2,3-bisphosphoglycerate-dependent phosphoglycerate mutase (Salmonella agona (strain SL483)).